The chain runs to 86 residues: Toxin Td2 (86 aa).

The signal sequence occupies residues 1-20; sequence MTRFVLFLNCFFLICMVVEC. The 63-residue stretch at 21-83 folds into the LCN-type CS-alpha/beta domain; that stretch reads KEGYLMGADG…TWDRATNTCG (63 aa). 4 disulfides stabilise this stretch: cysteine 31–cysteine 82, cysteine 35–cysteine 57, cysteine 43–cysteine 63, and cysteine 47–cysteine 65. The residue at position 84 (arginine 84) is an Arginine amide.

In terms of tissue distribution, expressed by the venom gland.

It is found in the secreted. Its function is as follows. Beta toxins bind voltage-independently at site-4 of sodium channels (Nav) and shift the voltage of activation toward more negative potentials thereby affecting sodium channel activation and promoting spontaneous and repetitive firing. The polypeptide is Toxin Td2 (Tityus discrepans (Venezuelan scorpion)).